Here is a 347-residue protein sequence, read N- to C-terminus: GMP reductase (347 aa).

108 to 131 contacts NADP(+); it reads DDFTKTRQILAMSTALRFICVDVA. Glycine 181 and glycine 183 together coordinate K(+). Catalysis depends on cysteine 186, which acts as the Thioimidate intermediate. Position 216–239 (216–239) interacts with NADP(+); it reads IVGDGGCTCPGDVAKAFGGGADFV.

The protein belongs to the IMPDH/GMPR family. GuaC type 1 subfamily. Homotetramer.

It catalyses the reaction IMP + NH4(+) + NADP(+) = GMP + NADPH + 2 H(+). Catalyzes the irreversible NADPH-dependent deamination of GMP to IMP. It functions in the conversion of nucleobase, nucleoside and nucleotide derivatives of G to A nucleotides, and in maintaining the intracellular balance of A and G nucleotides. This chain is GMP reductase, found in Aeromonas salmonicida (strain A449).